The following is a 282-amino-acid chain: Pantothenate synthetase (282 aa).

30–37 (MGALHRGH) serves as a coordination point for ATP. His37 serves as the catalytic Proton donor. (R)-pantoate is bound at residue Gln61. Residue Gln61 coordinates beta-alanine. 147–150 (GEKD) contacts ATP. (R)-pantoate is bound at residue Gln153. Position 184-187 (184-187 (LSSR)) interacts with ATP.

It belongs to the pantothenate synthetase family. As to quaternary structure, homodimer.

It localises to the cytoplasm. The catalysed reaction is (R)-pantoate + beta-alanine + ATP = (R)-pantothenate + AMP + diphosphate + H(+). Its pathway is cofactor biosynthesis; (R)-pantothenate biosynthesis; (R)-pantothenate from (R)-pantoate and beta-alanine: step 1/1. Functionally, catalyzes the condensation of pantoate with beta-alanine in an ATP-dependent reaction via a pantoyl-adenylate intermediate. The chain is Pantothenate synthetase from Rhizorhabdus wittichii (strain DSM 6014 / CCUG 31198 / JCM 15750 / NBRC 105917 / EY 4224 / RW1) (Sphingomonas wittichii).